The following is a 454-amino-acid chain: UPF0210 protein EUBREC_1565 (454 aa).

Belongs to the UPF0210 family. As to quaternary structure, homodimer.

The polypeptide is UPF0210 protein EUBREC_1565 (Agathobacter rectalis (strain ATCC 33656 / DSM 3377 / JCM 17463 / KCTC 5835 / VPI 0990) (Eubacterium rectale)).